Consider the following 653-residue polypeptide: Chaperone protein DnaK (653 aa).

Thr198 carries the phosphothreonine; by autocatalysis modification. Low complexity predominate over residues Asp608–Gly617. Residues Asp608 to Lys653 are disordered. Gly residues predominate over residues Met618–Gly629. Residues Asp639–Lys653 show a composition bias toward acidic residues.

It belongs to the heat shock protein 70 family.

Functionally, acts as a chaperone. This is Chaperone protein DnaK from Magnetococcus marinus (strain ATCC BAA-1437 / JCM 17883 / MC-1).